A 293-amino-acid chain; its full sequence is G1/S-specific cyclin-D3 (293 aa).

The 126-residue stretch at 27-152 (VLQSLLRLEE…LVLGKLKWDL (126 aa)) folds into the Cyclin N-terminal domain. A disordered region spans residues 257 to 293 (REAAQTAPSPVPKAPGGSSSQGPSQTSTPTDVTAIHL). Residues Ser265 and Ser280 each carry the phosphoserine modification. A compositionally biased stretch (low complexity) spans 271–286 (PGGSSSQGPSQTSTPT). Position 284 is a phosphothreonine (Thr284).

It belongs to the cyclin family. Cyclin D subfamily. Interacts with the CDK4 and CDK6 protein kinases to form a serine/threonine kinase holoenzyme complex. The cyclin subunit imparts substrate specificity to the complex. Interacts with ATF5. Interacts with EIF3K. Component of the ternary complex cyclin D/CDK4/CDKN1B required for nuclear translocation and modulation of CDK4-mediated kinase activity. Can form similar complexes with either CDKN1A or CDKN2A. Post-translationally, phosphorylation at Thr-284 by MAP kinases is required for ubiquitination and degradation by the DCX(AMBRA1) complex. Ubiquitinated by the DCX(AMBRA1) complex during the transition from G1 to S cell phase, leading to its degradation: ubiquitination is dependent on Thr-284 phosphorylation. The DCX(AMBRA1) complex represents the major regulator of CCND3 stability during the G1/S transition. Polyubiquitinated by the SCF(FBXL2) complex, leading to proteasomal degradation.

Its subcellular location is the nucleus. It localises to the cytoplasm. In terms of biological role, regulatory component of the cyclin D3-CDK4 (DC) complex that phosphorylates and inhibits members of the retinoblastoma (RB) protein family including RB1 and regulates the cell-cycle during G(1)/S transition. Phosphorylation of RB1 allows dissociation of the transcription factor E2F from the RB/E2F complex and the subsequent transcription of E2F target genes which are responsible for the progression through the G(1) phase. Hypophosphorylates RB1 in early G(1) phase. Cyclin D-CDK4 complexes are major integrators of various mitogenenic and antimitogenic signals. Component of the ternary complex, cyclin D3/CDK4/CDKN1B, required for nuclear translocation and activity of the cyclin D-CDK4 complex. Shows transcriptional coactivator activity with ATF5 independently of CDK4. The protein is G1/S-specific cyclin-D3 of Rattus norvegicus (Rat).